The chain runs to 247 residues: Cytochrome c oxidase subunit 2 (247 aa).

Topologically, residues 12–38 (DVPTPWGLYFQDSSTPNQEGIIELHDN) are mitochondrial intermembrane. The helical transmembrane segment at 39–59 (IMFYLVLILCTVSWLLFSIVK) threads the bilayer. At 60 to 78 (DSSKNPLPHKYLVHGQTIE) the chain is on the mitochondrial matrix side. A helical transmembrane segment spans residues 79–101 (IIWTILPAVVLLIIAFPSFILLY). Over 102–247 (LCDEVISPAM…KEFLTWLNEQ (146 aa)) the chain is Mitochondrial intermembrane. The Cu cation site is built by His-182, Cys-217, Glu-219, Cys-221, His-225, and Met-228. Glu-219 lines the Mg(2+) pocket.

The protein belongs to the cytochrome c oxidase subunit 2 family. As to quaternary structure, component of the cytochrome c oxidase (complex IV, CIV), a multisubunit enzyme composed of a catalytic core of 3 subunits and several supernumerary subunits. The complex exists as a monomer or a dimer and forms supercomplexes (SCs) in the inner mitochondrial membrane with ubiquinol-cytochrome c oxidoreductase (cytochrome b-c1 complex, complex III, CIII). Cu cation is required as a cofactor. In terms of processing, the signal sequence of COX2 is processed by IMP1.

It localises to the mitochondrion inner membrane. The enzyme catalyses 4 Fe(II)-[cytochrome c] + O2 + 8 H(+)(in) = 4 Fe(III)-[cytochrome c] + 2 H2O + 4 H(+)(out). Functionally, component of the cytochrome c oxidase, the last enzyme in the mitochondrial electron transport chain which drives oxidative phosphorylation. The respiratory chain contains 3 multisubunit complexes succinate dehydrogenase (complex II, CII), ubiquinol-cytochrome c oxidoreductase (cytochrome b-c1 complex, complex III, CIII) and cytochrome c oxidase (complex IV, CIV), that cooperate to transfer electrons derived from NADH and succinate to molecular oxygen, creating an electrochemical gradient over the inner membrane that drives transmembrane transport and the ATP synthase. Cytochrome c oxidase is the component of the respiratory chain that catalyzes the reduction of oxygen to water. Electrons originating from reduced cytochrome c in the intermembrane space (IMS) are transferred via the dinuclear copper A center (CU(A)) of subunit 2 and heme A of subunit 1 to the active site in subunit 1, a binuclear center (BNC) formed by heme A3 and copper B (CU(B)). The BNC reduces molecular oxygen to 2 water molecules using 4 electrons from cytochrome c in the IMS and 4 protons from the mitochondrial matrix. The protein is Cytochrome c oxidase subunit 2 (COX2) of Cyberlindnera mrakii (Yeast).